Reading from the N-terminus, the 175-residue chain is tRNA-acetylating toxin 3 (175 aa).

The acetyl-CoA site is built by leucine 95, valine 97, glycine 103, glycine 105, glycine 107, alanine 108, aspartate 133, glutamine 138, aspartate 141, and tryptophan 142. The active site involves tyrosine 143. Acetyl-CoA-binding residues include glycine 145 and phenylalanine 146.

The protein belongs to the acetyltransferase family. GNAT subfamily. Homodimer (in absence of antitoxin); has a condensed and elongated form. Forms a complex with cognate antitoxin TacA3. Forms a 4:2 antitoxin:toxin complex with cognate antitoxin TacA3. Forms a 4:4 antitoxin:toxin complex with promoter DNA, where 2 TacT3 dimers bridge 2 TacA3 dimers. Only TacA3 contacts promoter DNA in the octomeric form. TacT3 may contact DNA in the hexameric form.

It catalyses the reaction glycyl-tRNA(Gly) + acetyl-CoA = N-acetylglycyl-tRNA(Gly) + CoA + H(+). Functionally, toxic component of a type II toxin-antitoxin (TA) system. Acetylates tRNA and inhibits translation. Acetylates only Gly-tRNA on all 3 Gly-tRNA(Gly) isoacceptors in situ. In vitro acetylates mainly Ile/Leu and Gly. Overexpression during the lag phase of a tacA3-tacT3 deletion strain leads to a 150-fold increase in persister cells in the presence of cefotaxime and a non-growth state in the absence of antibiotic. Persister cell formation and the growth defect are neutralized by cognate antitoxin TacA3, but not by TacA1 or TacA2. Plays a role in persister cell formation. Its function is as follows. The TacA3-TacT3 complex both represses and derepresses expression of its own operon. The hexameric 4:2 TacA3-TacT3 complex binds promoter DNA and represses its transcription; both subunits are required. The octomeric 4:4 TacA3-TacT3 complex derepresses the operon. The shift from hexameric to octomeric complex probably alters DNA-binding, leading to dissociation from the operator DNA and derepression. This Salmonella typhimurium (strain 14028s / SGSC 2262) protein is tRNA-acetylating toxin 3.